The chain runs to 176 residues: Pituitary adenylate cyclase-activating polypeptide (176 aa).

A signal peptide spans 1–24; the sequence is MTMCSGARLALLVYGIIMHSSVYC. Positions 25 to 80 are excised as a propeptide; the sequence is SPAAAGLRFPGIRPEDEAYDEDGNPLQDFYDSDPPGVGGPASTLRDAYALYYPAEE. The tract at residues 150 to 158 is important for receptor binding; sequence VKKYLAAVL. At Leu-158 the chain carries Leucine amide. A Lysine amide modification is found at Lys-169. A propeptide spanning residues 173–176 is cleaved from the precursor; the sequence is IAYL.

Belongs to the glucagon family.

It is found in the secreted. In terms of biological role, PACAP is a neuropeptide involved in diverse array of physiological processes through activating the PACAP subfamily of class B1 G protein-coupled receptors: VIP receptor 1 (VIPR1), VIP receptor 2 (VIPR2), and PACAP type I receptor (ADCYAP1R1). Exerts neuroprotective and general cytoprotective effects due to anti-apoptotic, anti-inflammatory, and antioxidant actions. Promotes neuron projection development through the RAPGEF2/Rap1/B-Raf/ERK pathway. In chromaffin cells, induces long-lasting increase of intracellular calcium concentrations and neuroendocrine secretion. Involved in the control of glucose homeostasis, induces insulin secretion by pancreatic beta cells. PACAP exists in two bioactive forms from proteolysis of the same precursor protein, PACAP27 and PACAP38, which differ by eleven amino acid residues in the C-terminus. The sequence is that of Pituitary adenylate cyclase-activating polypeptide (ADCYAP1) from Sus scrofa (Pig).